The chain runs to 338 residues: Rho GTPase-activating protein gacA (338 aa).

One can recognise a Rho-GAP domain in the interval 149 to 327; sequence NTLEHVEDEG…NVLSHKVAVH (179 aa).

The protein localises to the cytoplasm. In terms of biological role, rho GTPase-activating protein involved in the signal transduction pathway. The sequence is that of Rho GTPase-activating protein gacA (gacA) from Dictyostelium discoideum (Social amoeba).